Reading from the N-terminus, the 207-residue chain is High frequency lysogenization protein HflD homolog (207 aa).

The protein belongs to the HflD family.

Its subcellular location is the cytoplasm. The protein localises to the cell inner membrane. This Cellvibrio japonicus (strain Ueda107) (Pseudomonas fluorescens subsp. cellulosa) protein is High frequency lysogenization protein HflD homolog.